A 497-amino-acid polypeptide reads, in one-letter code: UPF0371 protein DIP2346 (497 aa).

Belongs to the UPF0371 family.

The sequence is that of UPF0371 protein DIP2346 from Corynebacterium diphtheriae (strain ATCC 700971 / NCTC 13129 / Biotype gravis).